The primary structure comprises 558 residues: MPALLLLGTVALLASAAGPAGARPSNDTSSVAPGPLPALLAHLRRLTGALAGGGSAAGTSANATKTSPASGTGAAARAPPPAELCHGYYDVMGQYDATFNCSTGSYRFCCGTCHYRFCCEHRHMRLAQASCSNYDTPRWATTPPPLAGGAGGAGGAGGGPGPGQAGWLEGGRAGGAGGRGGEGPGGSTAYVVCGVISFALAVGVGAKVAFSKASRAPRAHREINVPRALVDILRHQAGPATRPDRARSSSLTPGLGGPDSMAPRTPKNLYNTMKPSNLDNLHYNVNSPKHHAATLDWRAMPPPSPSLHYSTLSCSRSFHNLSHLPPSYEAAVKSELNRYSSLKRLAEKDLDEAYLKRRQLEMPRGTLPLHALRRPGTGGGYRMDGWGGPEELGLAPAPNPRRVMSQEHLLGDGSRASRYEFTLPRARLVSQEHLLLSSPEALRQSREHLLSPPRSPALPPDPTTRASLAASHSNLLLGPGGPPTPLHGLPPSGLHAHHHHALHGSPQPAWMSDAGGGGGTLARRPPFQRQGTLEQLQFIPGHHLPQHLRTASKNEVTV.

An N-terminal signal peptide occupies residues 1–22; it reads MPALLLLGTVALLASAAGPAGA. Over 23–189 the chain is Extracellular; that stretch reads RPSNDTSSVA…GGEGPGGSTA (167 aa). A glycan (N-linked (GlcNAc...) asparagine) is linked at N26. Disordered regions lie at residues 53-79 and 142-181; these read GGSAAGTSANATKTSPASGTGAAARAP and TPPPLAGGAGGAGGAGGGPGPGQAGWLEGGRAGGAGGRGG. Residues 57–77 are compositionally biased toward low complexity; it reads AGTSANATKTSPASGTGAAAR. Over residues 148 to 181 the composition is skewed to gly residues; that stretch reads GGAGGAGGAGGGPGPGQAGWLEGGRAGGAGGRGG. Residues 154 to 175 form a GRID region; that stretch reads GGAGGGPGPGQAGWLEGGRAGG. Residues 190 to 210 form a helical membrane-spanning segment; the sequence is YVVCGVISFALAVGVGAKVAF. Topologically, residues 211–558 are cytoplasmic; it reads SKASRAPRAH…RTASKNEVTV (348 aa). The segment at 236 to 263 is disordered; it reads QAGPATRPDRARSSSLTPGLGGPDSMAP. S438 is subject to Phosphoserine. Positions 443–506 are disordered; that stretch reads RQSREHLLSP…HHHHALHGSP (64 aa). Pro residues predominate over residues 453-462; sequence PRSPALPPDP. A compositionally biased stretch (low complexity) spans 466–477; that stretch reads ASLAASHSNLLL. The residue at position 532 (T532) is a Phosphothreonine. The short motif at 555 to 558 is the PDZ-binding element; it reads EVTV.

It belongs to the shisa family. Interacts with GABA(A)R (GABA type A receptor) subunits GABRA1, GABRA2 and GABRG2; the interaction is direct. Does not interact with GABRB2 and GABRB3 subunits. Interacts with AMPAR subunits GRIA1, GRIA2 and GRIA3 and AMPAR auxiliary proteins SHISA6 and SHISA7 in heterologous cells. Interacts (via PDZ-binding motif) with DLG4/PSD-95 (via PDZ domain)in heterologous cells; the interaction is direct. Post-translationally, N-glycosylated. In terms of tissue distribution, mainly expressed in neurons. Highly expressed in brain structures including cortex, striatum, olfactory bulb, amygdala hippocampus CA1-3 and dentate gyrus (at protein level).

Its subcellular location is the postsynaptic density membrane. In terms of biological role, transmembrane protein that regulates gamma-aminobutyric acid type A receptor (GABA(A)R) trafficking, channel deactivation kinetics and pharmacology, necessary for fast inhibitory transmission in the brain. Enhances the action of benzodiazepine, a primary GABA(A)Rs target drug, in the brain. May affect channel kinetics of AMPA-type glutamate receptors (AMPAR), the brain's main excitatory neurotransmitter, necessary for synaptic hippocampal plasticity, and memory recall. May regulate the induction and maintenance of long-term potentiation at Schaffer collaterals/CA3-CA1 excitatory synapses. This chain is Protein shisa-7, found in Mus musculus (Mouse).